A 47-amino-acid polypeptide reads, in one-letter code: Large ribosomal subunit protein uL14c (47 aa).

It belongs to the universal ribosomal protein uL14 family. Part of the 50S ribosomal subunit.

It is found in the plastid. The protein localises to the chloroplast. In terms of biological role, binds to 23S rRNA. This chain is Large ribosomal subunit protein uL14c (rpl14), found in Vigna unguiculata (Cowpea).